Consider the following 273-residue polypeptide: 2,3,4,5-tetrahydropyridine-2,6-dicarboxylate N-succinyltransferase (273 aa).

Substrate-binding residues include Arg104 and Asp141.

The protein belongs to the transferase hexapeptide repeat family. As to quaternary structure, homotrimer.

Its subcellular location is the cytoplasm. It carries out the reaction (S)-2,3,4,5-tetrahydrodipicolinate + succinyl-CoA + H2O = (S)-2-succinylamino-6-oxoheptanedioate + CoA. It functions in the pathway amino-acid biosynthesis; L-lysine biosynthesis via DAP pathway; LL-2,6-diaminopimelate from (S)-tetrahydrodipicolinate (succinylase route): step 1/3. The protein is 2,3,4,5-tetrahydropyridine-2,6-dicarboxylate N-succinyltransferase of Aromatoleum aromaticum (strain DSM 19018 / LMG 30748 / EbN1) (Azoarcus sp. (strain EbN1)).